A 910-amino-acid chain; its full sequence is ZZ-type zinc finger-containing protein 3 (910 aa).

2 disordered regions span residues 41–117 and 133–153; these read AHPE…RQAE and EATN…PGEH. The segment covering 67–84 has biased composition (polar residues); it reads QKGTNNGRTSDVRQQSAR. Phosphoserine is present on residues Ser89, Ser96, Ser137, Ser138, and Ser142. Residues 96 to 116 are compositionally biased toward basic and acidic residues; the sequence is SSSEKDDLERQALESCERRQA. Over residues 142–153 the composition is skewed to basic and acidic residues; the sequence is SPVKPDKEPGEH. Lys283 participates in a covalent cross-link: Glycyl lysine isopeptide (Lys-Gly) (interchain with G-Cter in SUMO2). 3 disordered regions span residues 303–358, 373–444, and 609–641; these read TAES…VSGE, TSLS…PQDG, and ARPK…SHNR. Polar residues-rich tracts occupy residues 331–347 and 397–434; these read SSAS…NPLD and SSPT…SESP. The residue at position 401 (Lys401) is an N6-acetyllysine. Ser613 bears the Phosphoserine mark. Over residues 613 to 622 the composition is skewed to basic and acidic residues; the sequence is SPLDPKKDGE. Lys654 is covalently cross-linked (Glycyl lysine isopeptide (Lys-Gly) (interchain with G-Cter in SUMO2)). One can recognise an HTH myb-type domain in the interval 654 to 714; it reads KPETFNQLWT…RVQKYFIKLT (61 aa). The H-T-H motif DNA-binding region spans 687–710; it reads WQKIADELGNRTAKQVASRVQKYF. Lys708 is subject to N6-acetyllysine. Lys715 participates in a covalent cross-link: Glycyl lysine isopeptide (Lys-Gly) (interchain with G-Cter in SUMO2). The ZZ-type zinc finger occupies 825–884; it reads HVGFKCDNCGVEPIQGVRWHCQDCPPEMSLDFCDSCSDCPHETDIHKEDHQLEPVYKSET. Positions 830, 833, 845, 848, 857, 860, 870, and 874 each coordinate Zn(2+).

Component of the ADA2A-containing complex (ATAC), composed of KAT14, KAT2A, TADA2L, TADA3L, ZZ3, MBIP, WDR5, YEATS2, CCDC101 and DR1. Interacts via (ZZ-type zinc finger) with histone H3 in a methylation-independent manner and acetylation on 'Lys-4' (H3K4ac) moderately enhances the interaction.

The protein localises to the nucleus. Its function is as follows. Histone H3 reader that is required for the ATAC complex-mediated maintenance of histone acetylation and gene activation. Component of the ATAC complex, a complex with histone acetyltransferase activity on histones H3 and H4. This Mus musculus (Mouse) protein is ZZ-type zinc finger-containing protein 3 (Zzz3).